A 197-amino-acid chain; its full sequence is Holliday junction branch migration complex subunit RuvA (197 aa).

The domain I stretch occupies residues 1 to 64; sequence MIALLRGLVV…EDVLALYGFL (64 aa). The interval 65 to 143 is domain II; the sequence is TQDEKALFEK…AATGEEPGAP (79 aa). Positions 144-153 are flexible linker; it reads AAEALSPIDQ. The interval 153-197 is domain III; sequence QDVLSALLNLGCARPQAEAAVRKAKAAGASLDFEPLFRRALELVR.

It belongs to the RuvA family. Homotetramer. Forms an RuvA(8)-RuvB(12)-Holliday junction (HJ) complex. HJ DNA is sandwiched between 2 RuvA tetramers; dsDNA enters through RuvA and exits via RuvB. An RuvB hexamer assembles on each DNA strand where it exits the tetramer. Each RuvB hexamer is contacted by two RuvA subunits (via domain III) on 2 adjacent RuvB subunits; this complex drives branch migration. In the full resolvosome a probable DNA-RuvA(4)-RuvB(12)-RuvC(2) complex forms which resolves the HJ.

It localises to the cytoplasm. Functionally, the RuvA-RuvB-RuvC complex processes Holliday junction (HJ) DNA during genetic recombination and DNA repair, while the RuvA-RuvB complex plays an important role in the rescue of blocked DNA replication forks via replication fork reversal (RFR). RuvA specifically binds to HJ cruciform DNA, conferring on it an open structure. The RuvB hexamer acts as an ATP-dependent pump, pulling dsDNA into and through the RuvAB complex. HJ branch migration allows RuvC to scan DNA until it finds its consensus sequence, where it cleaves and resolves the cruciform DNA. This chain is Holliday junction branch migration complex subunit RuvA, found in Solibacter usitatus (strain Ellin6076).